A 551-amino-acid chain; its full sequence is CTP synthase (551 aa).

An amidoligase domain region spans residues 1 to 267 (MPKYVFVTGG…GRYVMEHLGW (267 aa)). Serine 13 is a CTP binding site. Serine 13 is a binding site for UTP. Residue 14–19 (SVGKGI) participates in ATP binding. Tyrosine 54 serves as a coordination point for L-glutamine. Aspartate 71 is an ATP binding site. Aspartate 71 and glutamate 141 together coordinate Mg(2+). CTP contacts are provided by residues 148–150 (DIE), 188–193 (KTKPTQ), and lysine 224. Residues 188 to 193 (KTKPTQ) and lysine 224 each bind UTP. The region spanning 292-532 (RIALVGKYVE…IGVAKHVLRE (241 aa)) is the Glutamine amidotransferase type-1 domain. Glycine 353 serves as a coordination point for L-glutamine. The active-site Nucleophile; for glutamine hydrolysis is the cysteine 380. L-glutamine-binding positions include 381–384 (YGLH), glutamate 404, and arginine 460. Catalysis depends on residues histidine 505 and glutamate 507.

It belongs to the CTP synthase family. Homotetramer.

The enzyme catalyses UTP + L-glutamine + ATP + H2O = CTP + L-glutamate + ADP + phosphate + 2 H(+). It carries out the reaction L-glutamine + H2O = L-glutamate + NH4(+). It catalyses the reaction UTP + NH4(+) + ATP = CTP + ADP + phosphate + 2 H(+). It participates in pyrimidine metabolism; CTP biosynthesis via de novo pathway; CTP from UDP: step 2/2. Its activity is regulated as follows. Allosterically activated by GTP, when glutamine is the substrate; GTP has no effect on the reaction when ammonia is the substrate. The allosteric effector GTP functions by stabilizing the protein conformation that binds the tetrahedral intermediate(s) formed during glutamine hydrolysis. Inhibited by the product CTP, via allosteric rather than competitive inhibition. Its function is as follows. Catalyzes the ATP-dependent amination of UTP to CTP with either L-glutamine or ammonia as the source of nitrogen. Regulates intracellular CTP levels through interactions with the four ribonucleotide triphosphates. This is CTP synthase from Thermomicrobium roseum (strain ATCC 27502 / DSM 5159 / P-2).